The chain runs to 1020 residues: Mastermind-like protein 1 (1020 aa).

The tract at residues 1 to 97 (MVLPTCPMAE…PAPASAPAAA (97 aa)) is required for interaction with NOTCH proteins. Ser-45 carries the phosphoserine modification. The span at 67–76 (KAKRAGKHRQ) shows a compositional bias: basic residues. The segment at 67 to 191 (KAKRAGKHRQ…TAGKHSLGLD (125 aa)) is disordered. Residues 77–99 (PPAAATAPVAAPAPASAPAAARL) show a composition bias toward low complexity. Over residues 100 to 122 (DAADGPEHGRPVAHLHDTVKRSL) the composition is skewed to basic and acidic residues. The span at 124-133 (SAASPQNGDQ) shows a compositional bias: polar residues. 4 positions are modified to phosphoserine: Ser-127, Ser-310, Ser-321, and Ser-367. Disordered regions lie at residues 335 to 522 (GASS…YGNT), 575 to 598 (PFRSLVPPGQEQNPSSVPVAAPAA), 663 to 686 (EKQQFQRHLTRPPPQYQDPTQSTF), 725 to 748 (SMGPGHAPVSSLPSSSGQQDRGVA), 794 to 866 (QNAS…NPFT), and 888 to 959 (AMPS…RPGL). A compositionally biased stretch (polar residues) spans 344 to 369 (DSPSLGSSQTLFHTTSQPGVDNSSPN). The segment covering 373-383 (ASAQAQSAQRA) has biased composition (low complexity). Residues 399–410 (ELSSAHQLQQIA) show a composition bias toward polar residues. Low complexity predominate over residues 419 to 435 (LQNPQQAAPAPGPGQLA). Over residues 491–515 (PSHSNLLSHQSPSNLNQNPVNNQGS) the composition is skewed to polar residues. Residues 588 to 598 (PSSVPVAAPAA) show a composition bias toward low complexity. Residues 794–818 (QNASTSAAYGQNSLGSASLSQQHSK) show a composition bias toward polar residues. At Lys-827 the chain carries N6-acetyllysine. Positions 837 to 864 (MGSQNASWQHQGMPNLSSQTSGNSSVNP) are enriched in polar residues. A compositionally biased stretch (low complexity) spans 911-920 (SAQQRNSAPA). A Phosphoserine modification is found at Ser-1019.

It belongs to the mastermind family. In terms of assembly, interacts (via N-terminus) with NOTCH1, NOTCH2, NOTCH3 and NOTCH4 (via ankyrin repeat region). Interacts (via N-terminus) with p53 (via DNA-binding region). Forms a DNA-binding complex with Notch proteins and RBPSUH/RBP-J kappa/CBF1. Also binds CREBBP/CBP and CDK8. Forms a complex with PRAG1, NOTCH1 and MAML1, in a MAML1-dependent manner. As to expression, at E9.5, strongly expressed in the telencephalon, first branchial arch, forelimb buds and somites. By 10.5 dpc, continuously expressed in brain and spinal cord. Also expressed in first and second branchial arches and limb buds. By 11.5 dpc, expression in CNS is weak but increases in mesodermal tissues. At 14.5 dpc, detected in epithelial cells in trachea, esophagus and proximal and distal tubules of the developing lungs.

It is found in the nucleus speckle. Functionally, acts as a transcriptional coactivator for NOTCH proteins. Has been shown to amplify NOTCH-induced transcription of HES1. Enhances phosphorylation and proteolytic turnover of the NOTCH intracellular domain in the nucleus through interaction with CDK8. Binds to CREBBP/CBP which promotes nucleosome acetylation at NOTCH enhancers and activates transcription. Induces phosphorylation and localization of CREBBP to nuclear foci. Plays a role in hematopoietic development by regulating NOTCH-mediated lymphoid cell fate decisions. The chain is Mastermind-like protein 1 from Mus musculus (Mouse).